The chain runs to 295 residues: 3-methyl-2-oxobutanoate hydroxymethyltransferase (295 aa).

Residues M1–A30 are disordered. D76 and D115 together coordinate Mg(2+). 3-methyl-2-oxobutanoate-binding positions include D76 to S77, D115, and K145. Residue E147 coordinates Mg(2+). Catalysis depends on E213, which acts as the Proton acceptor.

The protein belongs to the PanB family. In terms of assembly, homodecamer; pentamer of dimers. The cofactor is Mg(2+).

The protein resides in the cytoplasm. The enzyme catalyses 3-methyl-2-oxobutanoate + (6R)-5,10-methylene-5,6,7,8-tetrahydrofolate + H2O = 2-dehydropantoate + (6S)-5,6,7,8-tetrahydrofolate. Its pathway is cofactor biosynthesis; (R)-pantothenate biosynthesis; (R)-pantoate from 3-methyl-2-oxobutanoate: step 1/2. In terms of biological role, catalyzes the reversible reaction in which hydroxymethyl group from 5,10-methylenetetrahydrofolate is transferred onto alpha-ketoisovalerate to form ketopantoate. In Nocardioides sp. (strain ATCC BAA-499 / JS614), this protein is 3-methyl-2-oxobutanoate hydroxymethyltransferase.